A 156-amino-acid polypeptide reads, in one-letter code: Ribosomal RNA large subunit methyltransferase H (156 aa).

S-adenosyl-L-methionine is bound by residues Leu-73, Gly-104, and 123–128; that span reads LSSLTL.

Belongs to the RNA methyltransferase RlmH family. Homodimer.

The protein resides in the cytoplasm. It catalyses the reaction pseudouridine(1915) in 23S rRNA + S-adenosyl-L-methionine = N(3)-methylpseudouridine(1915) in 23S rRNA + S-adenosyl-L-homocysteine + H(+). Functionally, specifically methylates the pseudouridine at position 1915 (m3Psi1915) in 23S rRNA. The sequence is that of Ribosomal RNA large subunit methyltransferase H from Ralstonia nicotianae (strain ATCC BAA-1114 / GMI1000) (Ralstonia solanacearum).